Reading from the N-terminus, the 159-residue chain is NADH-quinone oxidoreductase subunit B (159 aa).

[4Fe-4S] cluster is bound by residues Cys37, Cys38, Cys102, and Cys132.

Belongs to the complex I 20 kDa subunit family. As to quaternary structure, NDH-1 is composed of 14 different subunits. Subunits NuoB, C, D, E, F, and G constitute the peripheral sector of the complex. Requires [4Fe-4S] cluster as cofactor.

It is found in the cell inner membrane. The catalysed reaction is a quinone + NADH + 5 H(+)(in) = a quinol + NAD(+) + 4 H(+)(out). NDH-1 shuttles electrons from NADH, via FMN and iron-sulfur (Fe-S) centers, to quinones in the respiratory chain. Couples the redox reaction to proton translocation (for every two electrons transferred, four hydrogen ions are translocated across the cytoplasmic membrane), and thus conserves the redox energy in a proton gradient. The chain is NADH-quinone oxidoreductase subunit B from Ruthia magnifica subsp. Calyptogena magnifica.